Reading from the N-terminus, the 157-residue chain is Nicotinate dehydrogenase subunit A (157 aa).

The 2Fe-2S ferredoxin-type domain occupies 3 to 79 (TTISLQVNGQ…GRNITTLEGL (77 aa)). Residues Cys-41, Cys-46, Cys-49, and Cys-61 each coordinate [2Fe-2S] cluster.

Requires [2Fe-2S] cluster as cofactor.

It catalyses the reaction 2 Fe(III)-[cytochrome] + nicotinate + H2O = 2 Fe(II)-[cytochrome] + 6-hydroxynicotinate + 2 H(+). The protein operates within cofactor degradation; nicotinate degradation. Subunit of the two-component enzyme NicAB that mediates nicotinate hydroxylation, the first step in the aerobic nicotinate degradation pathway. Mediates conversion of nicotinate into 6-hydroxynicotinate (6HNA). The chain is Nicotinate dehydrogenase subunit A (nicA) from Pseudomonas putida (strain ATCC 47054 / DSM 6125 / CFBP 8728 / NCIMB 11950 / KT2440).